The sequence spans 3996 residues: Probable E3 ubiquitin-protein ligase HECTD4 (3996 aa).

The chain crosses the membrane as a helical span at residues 282–302; it reads TCIIRCILVVFQVVFKFFFSP. Residues 1494–1510 are compositionally biased toward polar residues; it reads PTASEPDTTLTKTSPKN. Disordered stretches follow at residues 1494–1524 and 1616–1637; these read PTAS…ESEA and PETV…SICR. T2080 carries the phosphothreonine modification. Disordered regions lie at residues 2219 to 2245, 2859 to 2919, 3017 to 3053, and 3327 to 3403; these read FITS…DDIP, TSAT…PTVL, EDTK…STSS, and FDKS…QEVP. A compositionally biased stretch (acidic residues) spans 2232–2245; that stretch reads ADDESDDDDDDDIP. Low complexity predominate over residues 2866 to 2887; it reads LSDSSSSSSSSPGQTPQSPSLL. Positions 2888–2897 are enriched in basic residues; it reads SKRKKVKMKR. Basic and acidic residues-rich tracts occupy residues 3017–3037, 3327–3341, and 3370–3403; these read EDTK…EPEK, FDKS…EQHP, and LSEK…QEVP. The 370-residue stretch at 3627-3996 folds into the HECT domain; it reads SGGDPTYAFN…IHYREDPLSG (370 aa). Residue C3964 is the Glycyl thioester intermediate of the active site.

The protein resides in the membrane. The catalysed reaction is S-ubiquitinyl-[E2 ubiquitin-conjugating enzyme]-L-cysteine + [acceptor protein]-L-lysine = [E2 ubiquitin-conjugating enzyme]-L-cysteine + N(6)-ubiquitinyl-[acceptor protein]-L-lysine.. It functions in the pathway protein modification; protein ubiquitination. E3 ubiquitin-protein ligase which accepts ubiquitin from an E2 ubiquitin-conjugating enzyme in the form of a thioester and then directly transfers the ubiquitin to targeted substrates. This is Probable E3 ubiquitin-protein ligase HECTD4 (HECTD4) from Homo sapiens (Human).